The chain runs to 306 residues: Non-specific ribonucleoside hydrolase RihC (306 aa).

The active site involves histidine 235.

This sequence belongs to the IUNH family. RihC subfamily.

Functionally, hydrolyzes both purine and pyrimidine ribonucleosides with a broad-substrate specificity. The protein is Non-specific ribonucleoside hydrolase RihC of Salmonella agona (strain SL483).